A 311-amino-acid chain; its full sequence is Malate dehydrogenase (311 aa).

NAD(+) contacts are provided by residues 7–13 (GAAGGIG) and Asp-34. 2 residues coordinate substrate: Arg-81 and Arg-87. NAD(+)-binding positions include Asn-94 and 117 to 119 (ITN). Residues Asn-119 and Arg-153 each coordinate substrate. Residue His-177 is the Proton acceptor of the active site. Residue Met-227 participates in NAD(+) binding.

It belongs to the LDH/MDH superfamily. MDH type 1 family. Homodimer.

The catalysed reaction is (S)-malate + NAD(+) = oxaloacetate + NADH + H(+). Catalyzes the reversible oxidation of malate to oxaloacetate. This Pseudoalteromonas atlantica (strain T6c / ATCC BAA-1087) protein is Malate dehydrogenase.